The primary structure comprises 580 residues: Arginine--tRNA ligase (580 aa).

Residues Ala-131–His-141 carry the 'HIGH' region motif.

The protein belongs to the class-I aminoacyl-tRNA synthetase family. Monomer.

Its subcellular location is the cytoplasm. The catalysed reaction is tRNA(Arg) + L-arginine + ATP = L-arginyl-tRNA(Arg) + AMP + diphosphate. In Cereibacter sphaeroides (strain ATCC 17025 / ATH 2.4.3) (Rhodobacter sphaeroides), this protein is Arginine--tRNA ligase.